A 664-amino-acid chain; its full sequence is Protein-arginine deiminase type-3 (664 aa).

Belongs to the protein arginine deiminase family. The cofactor is Ca(2+). As to expression, epidermis and hair follicles.

The protein localises to the cytoplasm. The enzyme catalyses L-arginyl-[protein] + H2O = L-citrullyl-[protein] + NH4(+). Functionally, catalyzes the deimination of arginine residues of proteins. The polypeptide is Protein-arginine deiminase type-3 (Padi3) (Rattus norvegicus (Rat)).